Reading from the N-terminus, the 328-residue chain is Carbonic anhydrase-related protein 11 (328 aa).

The first 23 residues, 1 to 23, serve as a signal peptide directing secretion; that stretch reads MGAAARLSAPRALVLWAALGAAA. The 271-residue stretch at 33–303 folds into the Alpha-carbonic anhydrase domain; it reads DWWSYKDNLQ…LAHRALRGNR (271 aa). Asn-118, Asn-170, and Asn-260 each carry an N-linked (GlcNAc...) asparagine glycan. The interval 299 to 328 is disordered; that stretch reads LRGNRDPRHPERRCRGPNYRLHVDGVPHGR. Positions 319–328 are enriched in basic and acidic residues; it reads LHVDGVPHGR.

It belongs to the alpha-carbonic anhydrase family. In terms of tissue distribution, expressed abundantly in the brain with moderate expression also present in spinal cord and thyroid.

It localises to the secreted. In terms of biological role, does not have a catalytic activity. The chain is Carbonic anhydrase-related protein 11 (CA11) from Homo sapiens (Human).